The primary structure comprises 695 residues: Elongation factor G 2 (695 aa).

The region spanning 5–280 (SLYRNIGIFA…AVVDYLPSPT (276 aa)) is the tr-type G domain. GTP-binding positions include 14-21 (AHVDAGKT), 78-82 (DTPGH), and 132-135 (NKLD).

It belongs to the TRAFAC class translation factor GTPase superfamily. Classic translation factor GTPase family. EF-G/EF-2 subfamily.

Its subcellular location is the cytoplasm. In terms of biological role, catalyzes the GTP-dependent ribosomal translocation step during translation elongation. During this step, the ribosome changes from the pre-translocational (PRE) to the post-translocational (POST) state as the newly formed A-site-bound peptidyl-tRNA and P-site-bound deacylated tRNA move to the P and E sites, respectively. Catalyzes the coordinated movement of the two tRNA molecules, the mRNA and conformational changes in the ribosome. This is Elongation factor G 2 from Vibrio cholerae serotype O1 (strain ATCC 39315 / El Tor Inaba N16961).